The following is a 425-amino-acid chain: Melibiose permease (425 aa).

The Cytoplasmic portion of the chain corresponds to 1–13; it reads MNTTTCTHKDNPN. Residues 14 to 34 traverse the membrane as a helical segment; that stretch reads FWIFGLFFFLYFFIMATCFPF. The Periplasmic portion of the chain corresponds to 35-50; that stretch reads LPIWLSDIIGLNKTHT. A helical membrane pass occupies residues 51 to 71; that stretch reads GIVFSCISLSAIAFQPVLGVI. Residues 72–80 are Cytoplasmic-facing; sequence SDKLGLKKH. The helical transmembrane segment at 81 to 101 threads the bilayer; the sequence is LLWIISVLLFLFAPFFLYVFA. The Periplasmic portion of the chain corresponds to 102–107; the sequence is PLLKTN. A helical membrane pass occupies residues 108-128; it reads IWLGALSGGLYIGFVFSAGSG. The Cytoplasmic portion of the chain corresponds to 129–149; that stretch reads AIEAYIERVSRNSAFEYGKAR. The chain crosses the membrane as a helical span at residues 150–170; sequence MFGCLGWGLCASTGGILFGID. Position 171 (Pro171) is a topological domain, periplasmic. The chain crosses the membrane as a helical span at residues 172–192; it reads SYVFWMGSAAALLLMLLLVVA. Topologically, residues 193–227 are cytoplasmic; that stretch reads KPKPNQTAQVMNALGANQPQITAKKVFNLFRQRRM. A helical transmembrane segment spans residues 228–248; sequence WMFILYVIGVACVYDVFDQQF. Topologically, residues 249–267 are periplasmic; it reads ATFFKTFFATPQEGTRAFG. A helical membrane pass occupies residues 268-288; sequence FATTAGEICNAIIMFCSPWII. At 289-297 the chain is on the cytoplasmic side; the sequence is NRIGAKNTL. A helical membrane pass occupies residues 298–318; sequence LIAGLIMATRIIGSSFATTAV. The Periplasmic portion of the chain corresponds to 319–325; it reads EVIALKM. A helical transmembrane segment spans residues 326-346; it reads LHALEVPFLLVGAFKYITGVF. Residues 347–353 are Cytoplasmic-facing; the sequence is DTRLSAT. A helical membrane pass occupies residues 354-374; it reads IYLIGFQFAKQSAAIFLSAFA. Topologically, residues 375 to 385 are periplasmic; that stretch reads GNMYDRIGFQE. A helical membrane pass occupies residues 386 to 406; it reads TYLMLGCFVLAITVVSAFTLS. At 407 to 425 the chain is on the cytoplasmic side; sequence SRQEIAAAAGAAALTSQSR.

This sequence belongs to the major facilitator superfamily. Oligosaccharide:H(+) symporter (OHS) (TC 2.A.1.5) family.

The protein localises to the cell inner membrane. Its function is as follows. Responsible for transport of melibiose into the cell, with the concomitant import of a proton (symport system). Can also transport lactose, and has weak activity with maltose. Cannot transport the analog methyl-1-thio-beta,D-galactopyranoside (TMG). The sequence is that of Melibiose permease from Enterobacter cloacae subsp. cloacae (strain ATCC 13047 / DSM 30054 / NBRC 13535 / NCTC 10005 / WDCM 00083 / NCDC 279-56).